We begin with the raw amino-acid sequence, 639 residues long: Threonine--tRNA ligase (639 aa).

The TGS domain occupies 1-61 (MIHITLPDGS…TQDSPLSIVT (61 aa)). The tract at residues 242–533 (DHRKLGRELD…LIEEHAGALP (292 aa)) is catalytic. 3 residues coordinate Zn(2+): C333, H384, and H510.

This sequence belongs to the class-II aminoacyl-tRNA synthetase family. Homodimer. The cofactor is Zn(2+).

It localises to the cytoplasm. It carries out the reaction tRNA(Thr) + L-threonine + ATP = L-threonyl-tRNA(Thr) + AMP + diphosphate + H(+). In terms of biological role, catalyzes the attachment of threonine to tRNA(Thr) in a two-step reaction: L-threonine is first activated by ATP to form Thr-AMP and then transferred to the acceptor end of tRNA(Thr). Also edits incorrectly charged L-seryl-tRNA(Thr). This is Threonine--tRNA ligase from Acidovorax sp. (strain JS42).